A 216-amino-acid chain; its full sequence is Guanylate kinase (216 aa).

The region spanning 15-193 is the Guanylate kinase-like domain; that stretch reads GNLFMVVAPS…ALKQLQNVVH (179 aa). 22–29 is an ATP binding site; it reads APSGAGKS.

Belongs to the guanylate kinase family.

It is found in the cytoplasm. It catalyses the reaction GMP + ATP = GDP + ADP. Essential for recycling GMP and indirectly, cGMP. The protein is Guanylate kinase of Cupriavidus metallidurans (strain ATCC 43123 / DSM 2839 / NBRC 102507 / CH34) (Ralstonia metallidurans).